The chain runs to 416 residues: Enterobactin exporter EntS (416 aa).

Residues 1–21 are Cytoplasmic-facing; that stretch reads MNKQSWLLNLSLLKTHPAFRA. Residues 22–42 traverse the membrane as a helical segment; that stretch reads VFLARFISIVSLGLLGVAVPV. The Periplasmic portion of the chain corresponds to 43–55; that stretch reads QIQMMTHSTWQVG. Residues 56–76 traverse the membrane as a helical segment; sequence LSVTLTGGAMFVGLMVGGVLA. Residues 77–83 lie on the Cytoplasmic side of the membrane; the sequence is DRYERKK. Residues 84-104 traverse the membrane as a helical segment; it reads VILLARGTCGIGFIGLCLNAL. Residues 105–109 lie on the Periplasmic side of the membrane; sequence LPEPS. The chain crosses the membrane as a helical span at residues 110–130; the sequence is LLAIYLLGLWDGFFASLGVTA. Residues 131 to 156 are Cytoplasmic-facing; the sequence is LLAATPALVGRENLMQAGAITMLTVR. The chain crosses the membrane as a helical span at residues 157 to 177; sequence LGSVNSPMIGGLLLAIGGVAW. Position 178 (N178) is a topological domain, periplasmic. The helical transmembrane segment at 179–199 threads the bilayer; it reads YGLAAAGTFITLLPLLSLPAL. At 200–218 the chain is on the cytoplasmic side; the sequence is PPPPQPREHPLKSLLAGFR. The chain crosses the membrane as a helical span at residues 219–239; the sequence is FLLASPLVGGIALLGGLLTMA. The Periplasmic portion of the chain corresponds to 240-256; that stretch reads SAVRVLYPALADNWQMS. Residues 257–277 form a helical membrane-spanning segment; the sequence is AAQIGFLYAAIPLGAAIGALT. The Cytoplasmic segment spans residues 278–287; it reads SGKLAHSARP. Residues 288–307 traverse the membrane as a helical segment; it reads GLLMLLSTLGSFLAIGLFGL. Topologically, residues 308–313 are periplasmic; sequence MPMWIL. Residues 314-336 traverse the membrane as a helical segment; that stretch reads GVVCLALFGWLSAVSSLLQYTML. Topologically, residues 337-356 are cytoplasmic; that stretch reads QTQTPEVMLGRINGLWTAQN. The helical transmembrane segment at 357–377 threads the bilayer; it reads VTGDAIGAALLGGLGAMMTPV. Residue A378 is a topological domain, periplasmic. The helical transmembrane segment at 379-399 threads the bilayer; it reads SASASGFGLLIIGVLLLLVLV. At 400-416 the chain is on the cytoplasmic side; sequence ELRHFRQTPPQVTASDS.

It belongs to the major facilitator superfamily. EntS (TC 2.A.1.38) family.

Its subcellular location is the cell inner membrane. Functionally, component of an export pathway for enterobactin. The sequence is that of Enterobactin exporter EntS from Shigella dysenteriae serotype 1 (strain Sd197).